The chain runs to 205 residues: Putative 3-methyladenine DNA glycosylase (205 aa).

Belongs to the DNA glycosylase MPG family.

This chain is Putative 3-methyladenine DNA glycosylase, found in Bacillus cereus (strain ATCC 10987 / NRS 248).